The sequence spans 226 residues: Ribonuclease 3 (226 aa).

The region spanning 6-128 (INRLQRKLGY…LIGGVFLDSD (123 aa)) is the RNase III domain. Residue glutamate 41 coordinates Mg(2+). Residue aspartate 45 is part of the active site. Positions 114 and 117 each coordinate Mg(2+). Glutamate 117 is an active-site residue. One can recognise a DRBM domain in the interval 155 to 225 (DPKTRLQEYL…AEQALKQLEL (71 aa)).

The protein belongs to the ribonuclease III family. As to quaternary structure, homodimer. Mg(2+) serves as cofactor.

Its subcellular location is the cytoplasm. It carries out the reaction Endonucleolytic cleavage to 5'-phosphomonoester.. Digests double-stranded RNA. Involved in the processing of primary rRNA transcript to yield the immediate precursors to the large and small rRNAs (23S and 16S). Processes some mRNAs, and tRNAs when they are encoded in the rRNA operon. Processes pre-crRNA and tracrRNA of type II CRISPR loci if present in the organism. The chain is Ribonuclease 3 from Yersinia pseudotuberculosis serotype O:1b (strain IP 31758).